A 115-amino-acid chain; its full sequence is Immunoglobulin kappa chain variable 12-41 (115 aa).

The signal sequence occupies residues 1–20; it reads MSVLTQVLALLLLWLTGARC. The segment at 21-43 is framework-1; sequence DIQMTQSPASLSASVGETVTITC. The cysteines at positions 43 and 108 are disulfide-linked. The interval 44–54 is complementarity-determining-1; sequence RASGNIHNYLA. The interval 55–69 is framework-2; that stretch reads WYQQKQGKSPQLLVY. Positions 70–76 are complementarity-determining-2; the sequence is NAKTLAD. A framework-3 region spans residues 77–108; sequence GVPSRFSGSGSGTQYSLKINSLQPEDFGSYYC. The tract at residues 109–115 is complementarity-determining-3; that stretch reads QHFWSTP.

The sequence is that of Immunoglobulin kappa chain variable 12-41 from Mus musculus (Mouse).